Here is a 24-residue protein sequence, read N- to C-terminus: Formate ester dehydrogenase gamma chain (24 aa).

Heterotrimer composed of an alpha, a beta and a gamma chain.

This Amycolatopsis methanolica protein is Formate ester dehydrogenase gamma chain.